A 395-amino-acid polypeptide reads, in one-letter code: Zinc-regulated GTPase metalloprotein activator 1A (395 aa).

The segment at 1 to 22 (MLPAVGSADEEEDPAEEDCPEL) is disordered. Residues 8 to 20 (ADEEEDPAEEDCP) show a composition bias toward acidic residues. Residues 17–24 (EDCPELVP) carry the psi-PxLVp motif motif. 49–56 (GYLGAGKT) is a binding site for GTP. Cys-107, Cys-109, and Cys-110 together coordinate Zn(2+). The short motif at 107–110 (CLCC) is the CXCC motif element. GTP contacts are provided by residues 110–114 (CSVKD) and 203–206 (NKTD). A CobW C-terminal domain is found at 274–377 (IVTITFEVPG…ILKQLFIATV (104 aa)).

The protein belongs to the SIMIBI class G3E GTPase family. ZNG1 subfamily. Ubiquitously expressed. Up-regulated in cultured astrocytes treated with dopamine.

Its subcellular location is the nucleus. It catalyses the reaction GTP + H2O = GDP + phosphate + H(+). Its function is as follows. Zinc chaperone that directly transfers zinc cofactor to target metalloproteins, thereby activating them. Catalyzes zinc insertion into the active site of methionine aminopeptidase METAP1, which function to cleave the initiator methionine from polypeptides during or after protein translation. Mechanistically, the N-terminal psi-PxLVp motif binds to the C6H2-type zinc finger of inactive form of METAP1. After formation of the docked complex, zinc is transferred from the CXCC motif in the GTPase domain of ZNG1A to the zinc binding site in the peptidase domain of METAP1 in a process requiring GTP hydrolysis. GTP/GDP exchange is required for release of active METAP1. This is Zinc-regulated GTPase metalloprotein activator 1A from Homo sapiens (Human).